Consider the following 376-residue polypeptide: MSKGKVLLVLYEGGKHAEEQEKLLGCIENELGIRNFIEEQGYELVTTIDKDPEPTSTVDRELKDAEIVITTPFFPAYISRNRIAEAPNLKLCVTAGVGSDHVDLEAANERKITVTEVTGSNVVSVAEHVMATILVLIRNYNGGHQQAINGEWDIAGVAKNEYDLEDKIISTVGAGRIGYRVLERLVAFNPKKLLYYDYQELPAEAINRLNEASKLFNGRGDIVQRVEKLEDMVAQSDVVTINCPLHKDSRGLFNKKLISHMKDGAYLVNTARGAICVAEDVAEAVKSGKLAGYGGDVWDKQPAPKDHPWRTMDNKDHVGNAMTVHISGTSLHAQKRYAQGVKNILNSYFSKKFDYRPQDIIVQNGSYATRAYGQKK.

Positions 97 and 121 each coordinate substrate. NAD(+)-binding positions include 176 to 177 (RI), Asp-197, 244 to 248 (PLHKD), Thr-270, Asp-296, and 325 to 328 (HISG).

Belongs to the D-isomer specific 2-hydroxyacid dehydrogenase family. FDH subfamily. Homodimer.

The protein localises to the cytoplasm. The enzyme catalyses formate + NAD(+) = CO2 + NADH. Catalyzes the NAD(+)-dependent oxidation of formate to carbon dioxide. Formate oxidation is the final step in the methanol oxidation pathway in methylotrophic microorganisms. Has a role in the detoxification of exogenous formate in non-methylotrophic organisms. The chain is Formate dehydrogenase 2 (FDH2) from Saccharomyces cerevisiae (strain CEN.PK113-7D) (Baker's yeast).